A 122-amino-acid chain; its full sequence is Vacuolar transporter chaperone complex subunit 1 (122 aa).

The Cytoplasmic portion of the chain corresponds to 1–32 (MSTQPLLQTTPGKRIALPVRVEPKVFFANERT). The chain crosses the membrane as a helical span at residues 33 to 53 (FLSWLSFAVVLGGLSVGLLNF). Residues 54 to 59 (GDRIGK) are Vacuolar-facing. Residues 60–80 (ISAGLFTIVAIGTMGYALGIY) traverse the membrane as a helical segment. At 81 to 101 (HWRASAIRRRGSGPYDDRLGP) the chain is on the cytoplasmic side. Residues 102–122 (TILCFVLLAAIITNFVLRMLF) traverse the membrane as a helical segment.

This sequence belongs to the VTC1 family. In terms of assembly, the VTC core complex is an integral membrane heterooligomer composed of at least the catalytic subunit vtc4 and the accessory subunits vtc1 and vtc2. vtc1 is a small membrane protein without hydrophilic domain. Vtc2 and vtc4 are related and have 2 hydrophilic domains that face the cytosol, an N-terminal SPX domain and the central core domain. The central core in vtc4 is the catalytic domain. Vtc1 interacts with GTP-bound Ras-like cdc42, which is subsequently inactivated.

It localises to the vacuole membrane. Functionally, accessory subunit of the vacuolar transporter chaperone (VTC) complex. The VTC complex acts as a vacuolar polyphosphate polymerase that catalyzes the synthesis of inorganic polyphosphate (polyP) via transfer of phosphate from ATP to a growing polyP chain, releasing ADP. VTC exposes its catalytic domain vtc4 to the cytosol, where the growing polyP chain winds through a tunnel-shaped pocket, integrating cytoplasmic polymer synthesis with polyP membrane translocation. The VTC complex carries 9 vacuolar transmembrane domains, which are likely to constitute the translocation channel into the organelle lumen. PolyP synthesis is tightly coupled to its transport into the vacuole lumen, in order to avoid otherwise toxic intermediates in the cytosol, and it depends on the proton gradient across the membrane, formed by V-ATPase. Vtc1 contributes only 3 transmembrane domains to the complex. The VTC complex also plays a role in vacuolar membrane fusion. Involved in the control of cell polarity. The chain is Vacuolar transporter chaperone complex subunit 1 from Schizosaccharomyces pombe (strain 972 / ATCC 24843) (Fission yeast).